A 462-amino-acid chain; its full sequence is MSKLWGGRFTEEAEAWVEEFGASISFDQQLVNQDINGSIAHVTMLAKQGIVTKEEAEKIKIGLQYLLEEAKQNKLHFSVEAEDIHLNIEKMLMEKIGEVGGKLHTGRSRNDQVATDMHLYLKEKVEHIIKAIKQLQTVLVHQAENNIETIMPGYTHLQRAQPISFAHHILAYFWMLERDVNRYEDSLKRINISPLGAGALAGTTFPIDREYSAELLGFNGIYENSLDAVSDRDFILEFLSNSSMLMMHLSRFCEELILWSSQEFQFIEMSDQYATGSSIMPQKKNPDMAELIRGKTGRVYGNLFSLLTVMKGLPLAYNKDLQEDKEGMFDTVKTVEGCLHIMAGMLETMTVNKEKMGQAVTQDFSNATEIADYLANKGLPFRQAHEIVGKLVLHCTQKGIYLIDVPLATYKEMSALFEEDLYEVLSPYAAVKRRNSAGGTGFEQIEKALEKAKGLTKEAIKN.

It belongs to the lyase 1 family. Argininosuccinate lyase subfamily.

The protein localises to the cytoplasm. The catalysed reaction is 2-(N(omega)-L-arginino)succinate = fumarate + L-arginine. The protein operates within amino-acid biosynthesis; L-arginine biosynthesis; L-arginine from L-ornithine and carbamoyl phosphate: step 3/3. The protein is Argininosuccinate lyase of Bacillus anthracis (strain A0248).